A 612-amino-acid chain; its full sequence is FAD-linked oxidoreductase easE (612 aa).

The region spanning 129-313 is the FAD-binding PCMH-type domain; the sequence is HQGRIPLYSA…TRATMRVFPD (185 aa).

Belongs to the oxygen-dependent FAD-linked oxidoreductase family. The cofactor is FAD.

Its pathway is alkaloid biosynthesis; ergot alkaloid biosynthesis. In terms of biological role, FAD-linked oxidoreductase; part of the gene cluster that mediates the biosynthesis of fungal ergot alkaloid. DmaW catalyzes the first step of ergot alkaloid biosynthesis by condensing dimethylallyl diphosphate (DMAP) and tryptophan to form 4-dimethylallyl-L-tryptophan. The second step is catalyzed by the methyltransferase easF that methylates 4-dimethylallyl-L-tryptophan in the presence of S-adenosyl-L-methionine, resulting in the formation of 4-dimethylallyl-L-abrine. The catalase easC and the FAD-dependent oxidoreductase easE then transform 4-dimethylallyl-L-abrine to chanoclavine-I which is further oxidized by easD in the presence of NAD(+), resulting in the formation of chanoclavine-I aldehyde. Chanoclavine-I aldehyde is the precursor of ergoamides and ergopeptines in Clavicipitaceae, and clavine-type alcaloids such as fumiclavine in Trichocomaceae. However, the metabolites downstream of chanoclavine-I aldehyde in Arthrodermataceae have not been identified yet. The polypeptide is FAD-linked oxidoreductase easE (Arthroderma otae (strain ATCC MYA-4605 / CBS 113480) (Microsporum canis)).